We begin with the raw amino-acid sequence, 187 residues long: TATA-box-binding protein (187 aa).

2 tandem repeats follow at residues 10-86 and 101-179.

This sequence belongs to the TBP family.

In terms of biological role, general factor that plays a role in the activation of archaeal genes transcribed by RNA polymerase. Binds specifically to the TATA box promoter element which lies close to the position of transcription initiation. The chain is TATA-box-binding protein from Natronomonas pharaonis (strain ATCC 35678 / DSM 2160 / CIP 103997 / JCM 8858 / NBRC 14720 / NCIMB 2260 / Gabara) (Halobacterium pharaonis).